We begin with the raw amino-acid sequence, 693 residues long: Translation initiation factor IF-2 (693 aa).

Positions 181–349 (PRPPVVTVMG…MILLVAEMNE (169 aa)) constitute a tr-type G domain. Residues 190–197 (GHVDHGKT) are G1. 190–197 (GHVDHGKT) is a GTP binding site. The segment at 215–219 (GITQS) is G2. A G3 region spans residues 236–239 (DTPG). GTP contacts are provided by residues 236 to 240 (DTPGH) and 290 to 293 (NKID). The tract at residues 290-293 (NKID) is G4. The G5 stretch occupies residues 327-329 (SAR).

The protein belongs to the TRAFAC class translation factor GTPase superfamily. Classic translation factor GTPase family. IF-2 subfamily.

The protein resides in the cytoplasm. One of the essential components for the initiation of protein synthesis. Protects formylmethionyl-tRNA from spontaneous hydrolysis and promotes its binding to the 30S ribosomal subunits. Also involved in the hydrolysis of GTP during the formation of the 70S ribosomal complex. This chain is Translation initiation factor IF-2, found in Thermotoga petrophila (strain ATCC BAA-488 / DSM 13995 / JCM 10881 / RKU-1).